A 275-amino-acid polypeptide reads, in one-letter code: 4-hydroxy-tetrahydrodipicolinate reductase (275 aa).

Residues 13-18 and 108-110 each bind NAD(+); these read GAGGKM and GTT. The active-site Proton donor/acceptor is the H164. A (S)-2,3,4,5-tetrahydrodipicolinate-binding site is contributed by H165. K168 functions as the Proton donor in the catalytic mechanism. 174 to 175 serves as a coordination point for (S)-2,3,4,5-tetrahydrodipicolinate; that stretch reads GT.

This sequence belongs to the DapB family.

It is found in the cytoplasm. The enzyme catalyses (S)-2,3,4,5-tetrahydrodipicolinate + NAD(+) + H2O = (2S,4S)-4-hydroxy-2,3,4,5-tetrahydrodipicolinate + NADH + H(+). It catalyses the reaction (S)-2,3,4,5-tetrahydrodipicolinate + NADP(+) + H2O = (2S,4S)-4-hydroxy-2,3,4,5-tetrahydrodipicolinate + NADPH + H(+). The protein operates within amino-acid biosynthesis; L-lysine biosynthesis via DAP pathway; (S)-tetrahydrodipicolinate from L-aspartate: step 4/4. In terms of biological role, catalyzes the conversion of 4-hydroxy-tetrahydrodipicolinate (HTPA) to tetrahydrodipicolinate. This chain is 4-hydroxy-tetrahydrodipicolinate reductase, found in Picosynechococcus sp. (strain ATCC 27264 / PCC 7002 / PR-6) (Agmenellum quadruplicatum).